Consider the following 656-residue polypeptide: DNA mismatch repair protein MutL (656 aa).

The segment at 385 to 427 is disordered; sequence DNSDSLTEQNSTDYTVNQPETGSVSEKITDRTVESSNEFTDRT. Residues 387 to 410 are compositionally biased toward polar residues; the sequence is SDSLTEQNSTDYTVNQPETGSVSE. Positions 411 to 427 are enriched in basic and acidic residues; that stretch reads KITDRTVESSNEFTDRT.

It belongs to the DNA mismatch repair MutL/HexB family.

Its function is as follows. This protein is involved in the repair of mismatches in DNA. It is required for dam-dependent methyl-directed DNA mismatch repair. May act as a 'molecular matchmaker', a protein that promotes the formation of a stable complex between two or more DNA-binding proteins in an ATP-dependent manner without itself being part of a final effector complex. This chain is DNA mismatch repair protein MutL, found in Lactococcus lactis subsp. cremoris (strain SK11).